A 350-amino-acid chain; its full sequence is Biotin synthase (350 aa).

A Radical SAM core domain is found at Arg38–Ser262. The [4Fe-4S] cluster site is built by Cys53, Cys57, and Cys60. [2Fe-2S] cluster-binding residues include Cys97, Cys128, Cys188, and Arg260.

The protein belongs to the radical SAM superfamily. Biotin synthase family. As to quaternary structure, homodimer. The cofactor is [4Fe-4S] cluster. It depends on [2Fe-2S] cluster as a cofactor.

It carries out the reaction (4R,5S)-dethiobiotin + (sulfur carrier)-SH + 2 reduced [2Fe-2S]-[ferredoxin] + 2 S-adenosyl-L-methionine = (sulfur carrier)-H + biotin + 2 5'-deoxyadenosine + 2 L-methionine + 2 oxidized [2Fe-2S]-[ferredoxin]. Its pathway is cofactor biosynthesis; biotin biosynthesis; biotin from 7,8-diaminononanoate: step 2/2. Its function is as follows. Catalyzes the conversion of dethiobiotin (DTB) to biotin by the insertion of a sulfur atom into dethiobiotin via a radical-based mechanism. In Yersinia enterocolitica serotype O:8 / biotype 1B (strain NCTC 13174 / 8081), this protein is Biotin synthase.